Here is a 247-residue protein sequence, read N- to C-terminus: Glucosamine-6-phosphate deaminase (247 aa).

Catalysis depends on aspartate 67, which acts as the Proton acceptor; for enolization step. Residue asparagine 136 is the For ring-opening step of the active site. Histidine 138 acts as the Proton acceptor; for ring-opening step in catalysis. Residue glutamate 143 is the For ring-opening step of the active site.

The protein belongs to the glucosamine/galactosamine-6-phosphate isomerase family. NagB subfamily.

It carries out the reaction alpha-D-glucosamine 6-phosphate + H2O = beta-D-fructose 6-phosphate + NH4(+). It participates in amino-sugar metabolism; N-acetylneuraminate degradation; D-fructose 6-phosphate from N-acetylneuraminate: step 5/5. Catalyzes the reversible isomerization-deamination of glucosamine 6-phosphate (GlcN6P) to form fructose 6-phosphate (Fru6P) and ammonium ion. In Shouchella clausii (strain KSM-K16) (Alkalihalobacillus clausii), this protein is Glucosamine-6-phosphate deaminase.